Reading from the N-terminus, the 520-residue chain is Probable glycine dehydrogenase (decarboxylating) subunit 2 (520 aa).

The segment at 1 to 29 (MWRQSRWNEPLITEMSRRGRRGALPPRPD) is disordered. K279 carries the post-translational modification N6-(pyridoxal phosphate)lysine.

The protein belongs to the GcvP family. C-terminal subunit subfamily. In terms of assembly, the glycine cleavage system is composed of four proteins: P, T, L and H. In this organism, the P 'protein' is a heterodimer of two subunits. Pyridoxal 5'-phosphate serves as cofactor.

The catalysed reaction is N(6)-[(R)-lipoyl]-L-lysyl-[glycine-cleavage complex H protein] + glycine + H(+) = N(6)-[(R)-S(8)-aminomethyldihydrolipoyl]-L-lysyl-[glycine-cleavage complex H protein] + CO2. The glycine cleavage system catalyzes the degradation of glycine. The P protein binds the alpha-amino group of glycine through its pyridoxal phosphate cofactor; CO(2) is released and the remaining methylamine moiety is then transferred to the lipoamide cofactor of the H protein. The polypeptide is Probable glycine dehydrogenase (decarboxylating) subunit 2 (Aeropyrum pernix (strain ATCC 700893 / DSM 11879 / JCM 9820 / NBRC 100138 / K1)).